We begin with the raw amino-acid sequence, 172 residues long: MSKEKEVLLNEEIRADEIRCVGDDGKVYGIISSDEALEIANRLGLDLVMIAADAKPPVCKIMDYGKFRYQQEKKQKEAKKKQKVIDIKEIKLSVKIAQNDINYKVKHALEFLEQGKHVRFRVFLKGREMATPEAGVALLEKIWTMIENEANRDKEPNFEGRYVNMLVTPKKA.

This sequence belongs to the IF-3 family. As to quaternary structure, monomer.

It localises to the cytoplasm. Its function is as follows. IF-3 binds to the 30S ribosomal subunit and shifts the equilibrium between 70S ribosomes and their 50S and 30S subunits in favor of the free subunits, thus enhancing the availability of 30S subunits on which protein synthesis initiation begins. This Campylobacter jejuni subsp. jejuni serotype O:6 (strain 81116 / NCTC 11828) protein is Translation initiation factor IF-3.